The sequence spans 859 residues: Leucine--tRNA ligase (859 aa).

The 'HIGH' region signature appears at 42-52 (PYPSGRLHMGH). A 'KMSKS' region motif is present at residues 618–622 (KMSKS). Residue Lys-621 participates in ATP binding.

The protein belongs to the class-I aminoacyl-tRNA synthetase family.

The protein resides in the cytoplasm. The enzyme catalyses tRNA(Leu) + L-leucine + ATP = L-leucyl-tRNA(Leu) + AMP + diphosphate. In Shewanella sp. (strain W3-18-1), this protein is Leucine--tRNA ligase.